The chain runs to 100 residues: Urease subunit gamma (100 aa).

Belongs to the urease gamma subunit family. As to quaternary structure, heterotrimer of UreA (gamma), UreB (beta) and UreC (alpha) subunits. Three heterotrimers associate to form the active enzyme.

It is found in the cytoplasm. The catalysed reaction is urea + 2 H2O + H(+) = hydrogencarbonate + 2 NH4(+). Its pathway is nitrogen metabolism; urea degradation; CO(2) and NH(3) from urea (urease route): step 1/1. This chain is Urease subunit gamma, found in Prochlorococcus marinus (strain NATL1A).